Here is a 226-residue protein sequence, read N- to C-terminus: MSDSENEGPPQLSSYALAALQEFYAEQQHHHSDLCGDDKYNIGIIEENWQLSQFWYSPETATCLAEDAVAAAGEGGRIACVSAPSVYQKLRERHRDDVSVCIFEYDRRFAIYGEDFVYYDYKNPVDLPERIATHSFDIVVADPPYLSEECLRKMSETIKLLTRGKILLCTGAVMEDAAAKLLGVKMCKFIPEHTRTLGNEFRCFVNYNSGLDCNLSVQLPVQEGPK.

Ser-2 is subject to N-acetylserine. Residue Ser-2 is modified to Phosphoserine.

Belongs to the class I-like SAM-binding methyltransferase superfamily. EFM5 family.

It is found in the cytoplasm. It carries out the reaction L-lysyl-[protein] + 3 S-adenosyl-L-methionine = N(6),N(6),N(6)-trimethyl-L-lysyl-[protein] + 3 S-adenosyl-L-homocysteine + 3 H(+). In terms of biological role, protein-lysine methyltransferase that selectively catalyzes the trimethylation of EEF1A at 'Lys-79'. The polypeptide is EEF1A lysine methyltransferase 1 (Bos taurus (Bovine)).